The chain runs to 718 residues: Origin of replication complex subunit 3 (718 aa).

A compositionally biased stretch (low complexity) spans G26 to G43. Residues G26 to D75 form a disordered region. The Nuclear localization signal signature appears at I659–S666.

Belongs to the ORC3 family. As to quaternary structure, component of the origin recognition complex (ORC) composed of at least ORC1, ORC2, ORC3, ORC4, ORC5 and ORC6. ORC is regulated in a cell-cycle and development dependent manner. It is sequentially assembled at the exit from anaphase of mitosis and disassembled as cells enter S phase. Expressed at low levels in the shoot apical meristem (SAM), leaves, ears and roots (including root tips).

It localises to the nucleus. Its function is as follows. Component of the origin recognition complex (ORC) that binds origins of replication. DNA-binding is ATP-dependent. The specific DNA sequences that define origins of replication have not been identified yet. This chain is Origin of replication complex subunit 3, found in Oryza sativa subsp. japonica (Rice).